The following is a 34-amino-acid chain: Photosystem II reaction center protein T (34 aa).

The chain crosses the membrane as a helical span at residues 3 to 23; the sequence is ALVYTFLLVGTLGIIFFAIFF.

This sequence belongs to the PsbT family. As to quaternary structure, PSII is composed of 1 copy each of membrane proteins PsbA, PsbB, PsbC, PsbD, PsbE, PsbF, PsbH, PsbI, PsbJ, PsbK, PsbL, PsbM, PsbT, PsbY, PsbZ, Psb30/Ycf12, at least 3 peripheral proteins of the oxygen-evolving complex and a large number of cofactors. It forms dimeric complexes.

It is found in the plastid. It localises to the chloroplast thylakoid membrane. In terms of biological role, found at the monomer-monomer interface of the photosystem II (PS II) dimer, plays a role in assembly and dimerization of PSII. PSII is a light-driven water plastoquinone oxidoreductase, using light energy to abstract electrons from H(2)O, generating a proton gradient subsequently used for ATP formation. The polypeptide is Photosystem II reaction center protein T (Klebsormidium bilatum (Filamentous green alga)).